The primary structure comprises 628 residues: DNA mismatch repair protein MutL (628 aa).

Residues 335–411 (SVDIEPESEQ…ASRNSEVSLP (77 aa)) are disordered. Polar residues predominate over residues 343–353 (EQTTAWQTSPT).

Belongs to the DNA mismatch repair MutL/HexB family.

This protein is involved in the repair of mismatches in DNA. It is required for dam-dependent methyl-directed DNA mismatch repair. May act as a 'molecular matchmaker', a protein that promotes the formation of a stable complex between two or more DNA-binding proteins in an ATP-dependent manner without itself being part of a final effector complex. In Shewanella pealeana (strain ATCC 700345 / ANG-SQ1), this protein is DNA mismatch repair protein MutL.